A 247-amino-acid polypeptide reads, in one-letter code: Large ribosomal subunit protein uL30 (247 aa).

An N-acetylmethionine modification is found at Met1. A run of 4 repeats spans residues 7 to 17 (KKKVPAVPETL), 18 to 29 (KKKRRNFAELKI), 30 to 41 (KRLRKKFAQKML), and 42 to 53 (RKARRKLIYEKA). The tract at residues 7 to 53 (KKKVPAVPETLKKKRRNFAELKIKRLRKKFAQKMLRKARRKLIYEKA) is 4 X 12 AA tandem repeats. A Phosphothreonine modification is found at Thr16. Lys123 is subject to N6-acetyllysine. The residue at position 126 (Lys126) is an N6-succinyllysine. Residue Tyr138 is modified to Phosphotyrosine.

It belongs to the universal ribosomal protein uL30 family. In terms of assembly, component of the large ribosomal subunit. Homodimer. Interacts with DHX33.

The protein localises to the cytoplasm. Component of the large ribosomal subunit. The ribosome is a large ribonucleoprotein complex responsible for the synthesis of proteins in the cell. Binds to G-rich structures in 28S rRNA and in mRNAs. Plays a regulatory role in the translation apparatus; inhibits cell-free translation of mRNAs. This chain is Large ribosomal subunit protein uL30 (RPL7), found in Pongo abelii (Sumatran orangutan).